A 315-amino-acid chain; its full sequence is Ribosomal protein L11 methyltransferase (315 aa).

Residues threonine 161, glycine 182, aspartate 204, and asparagine 248 each contribute to the S-adenosyl-L-methionine site.

Belongs to the methyltransferase superfamily. PrmA family.

Its subcellular location is the cytoplasm. It catalyses the reaction L-lysyl-[protein] + 3 S-adenosyl-L-methionine = N(6),N(6),N(6)-trimethyl-L-lysyl-[protein] + 3 S-adenosyl-L-homocysteine + 3 H(+). Functionally, methylates ribosomal protein L11. The sequence is that of Ribosomal protein L11 methyltransferase from Shouchella clausii (strain KSM-K16) (Alkalihalobacillus clausii).